The following is a 298-amino-acid chain: Methylsterol monooxygenase 1-1 (298 aa).

Transmembrane regions (helical) follow at residues 42–62, 96–116, and 118–138; these read ILFLFLVFSLVPLPLVFVELA, FILVVGPLQLVSYPSIQMIEI, and SGLPLPTITEMLSQLVVYFLI. Residues 132-267 enclose the Fatty acid hydroxylase domain; it reads LVVYFLIEDY…FTYCDYIYGT (136 aa). The Histidine box-1 motif lies at 147–151; it reads HRFFH. Positions 160–164 match the Histidine box-2 motif; sequence HRVHH. The helical transmembrane segment at 189–209 threads the bilayer; it reads TFMGPAIAPGHMITFWLWIAL. The Histidine box-3 motif lies at 239 to 245; that stretch reads YHDYHHY.

Belongs to the sterol desaturase family. As to quaternary structure, interacts with ACBP1. Fe cation is required as a cofactor. In terms of tissue distribution, expressed in rosettes, stems, roots, floral buds, flowers and siliques.

It localises to the endoplasmic reticulum membrane. It carries out the reaction 4,4-dimethyl-5alpha-cholest-7-en-3beta-ol + 6 Fe(II)-[cytochrome b5] + 3 O2 + 5 H(+) = 4alpha-carboxy-4beta-methyl-5alpha-cholest-7-ene-3beta-ol + 6 Fe(III)-[cytochrome b5] + 4 H2O. The enzyme catalyses 24-methylenecycloartanol + 6 Fe(II)-[cytochrome b5] + 3 O2 + 5 H(+) = 4alpha-carboxy-4beta,14alpha-dimethyl-9beta,19-cyclo-5alpha-ergost-24(24(1))-en-3beta-ol + 6 Fe(III)-[cytochrome b5] + 4 H2O. In terms of biological role, non-heme iron oxygenase involved in sterols biosynthesis by catalyzing the removal of the first methyl group at the C-4 position. 4,4-dimethyl-9-beta,19-cyclopropylsterols such as 24-methylenecycloartanol are the preferred substrates. Acts as a rate-limiting enzyme in the sterol pathway via interaction with ACBP1; sterols serve as lipid modulators for gene expression of homeodomain-leucine zipper IV transcription factors. Together with SMO1-2, involved in the maintenance of sterol composition to balance auxin and cytokinin activities during embryogenesis. The protein is Methylsterol monooxygenase 1-1 of Arabidopsis thaliana (Mouse-ear cress).